The sequence spans 448 residues: MSASAVNVTPGRNVVVVGTQWGDEGKGKIVDWLTDHAQGVVRFQGGHNAGHTLIIGGKKTILRLIPSGIMREGVACYIGNGVVLSPEALFKEIGELEEAGLSVRERLFISEATTLILPYHVAIDQAREARRGAGKIGTTGRGIGPAYEDKVGRRALRVQDLFDARTFADRLRENLDFHNFVLTQYLGGAAVDFQATLDTMLGYADRLKPMVTDVSRRLYEENHAGRNLLFEGAQGTLLDIDHGTYPFVTSSNCVAGAAAAGAGVGPQKLDYILGITKAYCTRVGSGPFPSELYDADNPSRQDQIGITLANVGKEFGSVTGRPRRTGWLDAAALRRSIQINGVSGLCMTKLDVLDGLDEVKLCVGYKIDGEDVDLLPRGAAEVARCEPVYETFGGWKESTVGIDSWDALPANARAYLTRVQEVAGVPIDMVSTGPDRDETILLRHPFKV.

Residues 22–28 and 50–52 each bind GTP; these read GDEGKGK and GHT. Asp-23 acts as the Proton acceptor in catalysis. Positions 23 and 50 each coordinate Mg(2+). IMP contacts are provided by residues 23–26, 48–51, Thr-139, Arg-153, Gln-234, Thr-249, and Arg-321; these read DEGK and NAGH. The Proton donor role is filled by His-51. 317 to 323 contacts substrate; the sequence is SVTGRPR. Residues Arg-323, 349-351, and 431-433 contribute to the GTP site; these read KLD and STG.

This sequence belongs to the adenylosuccinate synthetase family. As to quaternary structure, homodimer. It depends on Mg(2+) as a cofactor.

The protein resides in the cytoplasm. It carries out the reaction IMP + L-aspartate + GTP = N(6)-(1,2-dicarboxyethyl)-AMP + GDP + phosphate + 2 H(+). Its pathway is purine metabolism; AMP biosynthesis via de novo pathway; AMP from IMP: step 1/2. In terms of biological role, plays an important role in the de novo pathway of purine nucleotide biosynthesis. Catalyzes the first committed step in the biosynthesis of AMP from IMP. This chain is Adenylosuccinate synthetase, found in Burkholderia pseudomallei (strain 1106a).